The following is a 582-amino-acid chain: Membrane-bound O-acyltransferase GUP1 (582 aa).

The Extracellular portion of the chain corresponds to 1-61 (MVIPRYHLIP…IIKQANPKSR (61 aa)). The helical transmembrane segment at 62-82 (WSTIEFKFYYLVFLIIVPLMF) threads the bilayer. The Cytoplasmic portion of the chain corresponds to 83–121 (KAGMESANENNPNYPKYEHLLSNGWIFGRKVDNSDQQYR). The chain crosses the membrane as a helical span at residues 122-144 (FFRNNFPLLCLLIIIHVGLRRVI). Residues 145-158 (NRIIPLSSKRTYFD) lie on the Extracellular side of the membrane. The chain crosses the membrane as a helical span at residues 159–179 (FIFGIIFLIGAHGVNVLKLSI). Topologically, residues 180-195 (HLLINYLIGKYIKNYK) are cytoplasmic. A helical transmembrane segment spans residues 196–216 (LSLWITWIYGISSLFFNEWYG). The Extracellular portion of the chain corresponds to 217 to 294 (NYTLGLSFLS…TAPLPIEDYN (78 aa)). Residues 295–315 (IFNYISYLTYTPLFIAGPILT) form a helical membrane-spanning segment. At 316–343 (FNDYIYQSNYQQSSSTKDYHRIMMYLIR) the chain is on the cytoplasmic side. A helical transmembrane segment spans residues 344–364 (FIFCLLTLEFILHFMYVVAAS). Over 365–373 (KTKSWEGNL) the chain is Extracellular. A helical membrane pass occupies residues 374–394 (PFQISMLGMFNLNIIWLKLLI). Over 395–454 (PWRLFRLWSLLDGIDPPENMIRCMDNNFSALAFWRAWHRSYNRWIIRYIYLPMGGGGKYR) the chain is Cytoplasmic. Transmembrane regions (helical) follow at residues 455-475 (ILNSLLVFSFVAIWHDIELKL) and 476-496 (LMWGWLVVLFLIPEISVTMIF). H469 is an active-site residue. The Cytoplasmic portion of the chain corresponds to 497–507 (KKYRNQWWYRH). Residues 508–528 (LCGVGAVINIWMMMIANLVGF) form a helical membrane-spanning segment. The Extracellular segment spans residues 529–548 (CLGTDGMWKLLHDLFKTFDG). The helical transmembrane segment at 549–569 (VRFLIISSGALFVGAQIMFEI) threads the bilayer. Residues 570 to 582 (RESEMRKGINVRC) lie on the Cytoplasmic side of the membrane.

It belongs to the membrane-bound acyltransferase family.

Its subcellular location is the cell membrane. The protein localises to the endoplasmic reticulum membrane. The protein resides in the mitochondrion membrane. In terms of biological role, membrane-bound O-acyltransferase involved in the remodeling of glycosylphosphatidylinositol (GPI) anchors. Acts only on GPI-anchored proteins, but not on free GPI lipids. Also involved in lipid metabolism, having profound effects on sphingolipid-sterol-ordered domains integrity and assembly. Involved in cell integrity and apoptosis. This is Membrane-bound O-acyltransferase GUP1 (GUP1) from Candida tropicalis (Yeast).